A 1058-amino-acid chain; its full sequence is Carbamoyl phosphate synthase large chain (1058 aa).

A carboxyphosphate synthetic domain region spans residues 1 to 399 (MPIDKDIKKV…AIQKAIRSLD (399 aa)). Residues Arg-127, Arg-167, Gly-173, Gly-174, Glu-206, Val-208, Glu-213, Gly-239, Ile-240, His-241, Gln-282, and Glu-296 each coordinate ATP. An ATP-grasp 1 domain is found at 131–325 (GHFMDKLNEP…IAKISSKIAL (195 aa)). 3 residues coordinate Mg(2+): Gln-282, Glu-296, and Asn-298. 3 residues coordinate Mn(2+): Gln-282, Glu-296, and Asn-298. Residues 400–538 (MGHDGFEYVE…YSTYDSGNEL (139 aa)) form an oligomerization domain region. A carbamoyl phosphate synthetic domain region spans residues 539–924 (KSSNKKKIVI…YKSQLAAGMD (386 aa)). In terms of domain architecture, ATP-grasp 2 spans 663-856 (AKLLNKLHIH…LAKVATWIMT (194 aa)). The ATP site is built by Arg-699, Lys-738, Leu-740, Glu-745, Gly-770, Val-771, His-772, Ser-773, Gln-813, and Glu-827. Gln-813, Glu-827, and Asn-829 together coordinate Mg(2+). Mn(2+) contacts are provided by Gln-813, Glu-827, and Asn-829. The MGS-like domain occupies 923–1058 (MDLPKEGKIF…KSLNEHIDGE (136 aa)). Residues 925–1058 (LPKEGKIFIS…KSLNEHIDGE (134 aa)) form an allosteric domain region.

Belongs to the CarB family. As to quaternary structure, composed of two chains; the small (or glutamine) chain promotes the hydrolysis of glutamine to ammonia, which is used by the large (or ammonia) chain to synthesize carbamoyl phosphate. Tetramer of heterodimers (alpha,beta)4. The cofactor is Mg(2+). It depends on Mn(2+) as a cofactor.

The catalysed reaction is hydrogencarbonate + L-glutamine + 2 ATP + H2O = carbamoyl phosphate + L-glutamate + 2 ADP + phosphate + 2 H(+). It catalyses the reaction hydrogencarbonate + NH4(+) + 2 ATP = carbamoyl phosphate + 2 ADP + phosphate + 2 H(+). The protein operates within amino-acid biosynthesis; L-arginine biosynthesis; carbamoyl phosphate from bicarbonate: step 1/1. It functions in the pathway pyrimidine metabolism; UMP biosynthesis via de novo pathway; (S)-dihydroorotate from bicarbonate: step 1/3. In terms of biological role, large subunit of the glutamine-dependent carbamoyl phosphate synthetase (CPSase). CPSase catalyzes the formation of carbamoyl phosphate from the ammonia moiety of glutamine, carbonate, and phosphate donated by ATP, constituting the first step of 2 biosynthetic pathways, one leading to arginine and/or urea and the other to pyrimidine nucleotides. The large subunit (synthetase) binds the substrates ammonia (free or transferred from glutamine from the small subunit), hydrogencarbonate and ATP and carries out an ATP-coupled ligase reaction, activating hydrogencarbonate by forming carboxy phosphate which reacts with ammonia to form carbamoyl phosphate. The protein is Carbamoyl phosphate synthase large chain of Methanobrevibacter smithii (strain ATCC 35061 / DSM 861 / OCM 144 / PS).